The chain runs to 217 residues: Large ribosomal subunit protein uL29m (217 aa).

Belongs to the universal ribosomal protein uL29 family. As to quaternary structure, component of the mitochondrial large ribosomal subunit. Mature mitochondrial ribosomes consist of a small (37S) and a large (54S) subunit. The 37S subunit contains at least 33 different proteins and 1 molecule of RNA (15S). The 54S subunit contains at least 45 different proteins and 1 molecule of RNA (21S).

It localises to the mitochondrion. The chain is Large ribosomal subunit protein uL29m (mrpl4) from Aspergillus clavatus (strain ATCC 1007 / CBS 513.65 / DSM 816 / NCTC 3887 / NRRL 1 / QM 1276 / 107).